A 237-amino-acid chain; its full sequence is Phosphoribosylaminoimidazole-succinocarboxamide synthase (237 aa).

This sequence belongs to the SAICAR synthetase family.

The catalysed reaction is 5-amino-1-(5-phospho-D-ribosyl)imidazole-4-carboxylate + L-aspartate + ATP = (2S)-2-[5-amino-1-(5-phospho-beta-D-ribosyl)imidazole-4-carboxamido]succinate + ADP + phosphate + 2 H(+). The protein operates within purine metabolism; IMP biosynthesis via de novo pathway; 5-amino-1-(5-phospho-D-ribosyl)imidazole-4-carboxamide from 5-amino-1-(5-phospho-D-ribosyl)imidazole-4-carboxylate: step 1/2. This is Phosphoribosylaminoimidazole-succinocarboxamide synthase from Yersinia pseudotuberculosis serotype O:1b (strain IP 31758).